A 123-amino-acid polypeptide reads, in one-letter code: Small ribosomal subunit protein uS12 (123 aa).

D89 is modified (3-methylthioaspartic acid).

It belongs to the universal ribosomal protein uS12 family. As to quaternary structure, part of the 30S ribosomal subunit. Contacts proteins S8 and S17. May interact with IF1 in the 30S initiation complex.

Functionally, with S4 and S5 plays an important role in translational accuracy. Its function is as follows. Interacts with and stabilizes bases of the 16S rRNA that are involved in tRNA selection in the A site and with the mRNA backbone. Located at the interface of the 30S and 50S subunits, it traverses the body of the 30S subunit contacting proteins on the other side and probably holding the rRNA structure together. The combined cluster of proteins S8, S12 and S17 appears to hold together the shoulder and platform of the 30S subunit. The sequence is that of Small ribosomal subunit protein uS12 from Methylorubrum extorquens (strain PA1) (Methylobacterium extorquens).